Consider the following 299-residue polypeptide: DNA-binding transcriptional activator HetR (299 aa).

Serine 152 is a catalytic residue.

Belongs to the peptidase S48 family. As to quaternary structure, homodimer; disulfide-linked.

Its function is as follows. Might be involved in temporal and/or spatial regulation of nitrogen fixation. Dimerization is required for DNA-binding. Has both a protease and a DNA-binding activity. The polypeptide is DNA-binding transcriptional activator HetR (Leptolyngbya boryana (Plectonema boryanum)).